A 102-amino-acid chain; its full sequence is Large ribosomal subunit protein bL21 (102 aa).

Belongs to the bacterial ribosomal protein bL21 family. As to quaternary structure, part of the 50S ribosomal subunit. Contacts protein L20.

Its function is as follows. This protein binds to 23S rRNA in the presence of protein L20. The polypeptide is Large ribosomal subunit protein bL21 (Oceanobacillus iheyensis (strain DSM 14371 / CIP 107618 / JCM 11309 / KCTC 3954 / HTE831)).